A 383-amino-acid chain; its full sequence is MEVLATDTASQQERLQAIAEKRRKQAEIESKRRQLEDDRRQLQYLKSKALRERWLLEGTPSSASEGDEDMRKQMQEDEQKARGLEESITRLEKEIDVLEFGESAPAASKENSAAPSPGRPQSASPAKEEQKSETLVNAQQTPLGTPKENRTSTPVRSPGGSTMMKAAMYSVEITVEKDKVTGETRVLSSTTVLPRDPLPQGVKVYEDETKVVHAVDGIAENGIQPLSSSEVDELIHKADEVTLSEAGSTAGPAEPRGLAEDVTRTTPSRREITGVEAQPGEATSGPPGIQPGQEPPVTMVFMGYQNVEDEAETKKVLGLQDTIKAELVVIEDAATPREPAPLNGSAAELPATKEENQTGPTTTPSDTQDLDMKKPRCRCCSVM.

N-acetylmethionine is present on Met1. Residues 5–102 (ATDTASQQER…KEIDVLEFGE (98 aa)) are a coiled coil. Disordered regions lie at residues 51-163 (RERW…GSTM), 242-295 (TLSE…GQEP), and 334-375 (ATPR…MKKP). A compositionally biased stretch (basic and acidic residues) spans 69 to 96 (DMRKQMQEDEQKARGLEESITRLEKEID). Composition is skewed to polar residues over residues 109 to 124 (KENS…QSAS) and 133 to 143 (ETLVNAQQTPL). Ser116, Ser122, and Ser124 each carry phosphoserine. A phosphothreonine mark is found at Thr141, Thr145, and Thr153. Phosphoserine is present on residues Ser157 and Ser161. Thr242 carries the phosphothreonine modification. Ser244 carries the post-translational modification Phosphoserine. Residues 257–273 (GLAEDVTRTTPSRREIT) are compositionally biased toward basic and acidic residues. The span at 285–295 (GPPGIQPGQEP) shows a compositional bias: low complexity. At Ser345 the chain carries Phosphoserine. The segment covering 357–367 (QTGPTTTPSDT) has biased composition (polar residues). A phosphothreonine mark is found at Thr361, Thr362, and Thr363. Ser365 is subject to Phosphoserine. Position 367 is a phosphothreonine (Thr367). 2 S-palmitoyl cysteine lipidation sites follow: Cys377 and Cys379. Cys380 carries the cysteine methyl ester modification. Cys380 is lipidated: S-farnesyl cysteine. A propeptide spans 381–383 (SVM) (removed in mature form).

This sequence belongs to the paralemmin family. As to quaternary structure, interacts with dopamine receptor DRD3. Expression is highest in brain, intermediate in adrenal gland and kidney, and much lower or undetectable in other tissues. Isoform 1 is the predominant isoform in most tissues except brain and kidney where isoform 2 predominates.

The protein localises to the cell membrane. It localises to the cell projection. Its subcellular location is the filopodium membrane. The protein resides in the axon. It is found in the dendrite. The protein localises to the dendritic spine. It localises to the basolateral cell membrane. Its subcellular location is the apicolateral cell membrane. Involved in plasma membrane dynamics and cell process formation. Isoform 1 and isoform 2 are necessary for axonal and dendritic filopodia induction, for dendritic spine maturation and synapse formation in a palmitoylation-dependent manner. The chain is Paralemmin-1 (Palm) from Mus musculus (Mouse).